The primary structure comprises 70 residues: ATP synthase subunit c (70 aa).

A run of 2 helical transmembrane segments spans residues 3 to 23 (ALAA…IGIA) and 44 to 64 (LFFI…VIAI).

Belongs to the ATPase C chain family. As to quaternary structure, F-type ATPases have 2 components, F(1) - the catalytic core - and F(0) - the membrane proton channel. F(1) has five subunits: alpha(3), beta(3), gamma(1), delta(1), epsilon(1). F(0) has three main subunits: a(1), b(2) and c(10-14). The alpha and beta chains form an alternating ring which encloses part of the gamma chain. F(1) is attached to F(0) by a central stalk formed by the gamma and epsilon chains, while a peripheral stalk is formed by the delta and b chains.

It localises to the cell membrane. Its function is as follows. F(1)F(0) ATP synthase produces ATP from ADP in the presence of a proton or sodium gradient. F-type ATPases consist of two structural domains, F(1) containing the extramembraneous catalytic core and F(0) containing the membrane proton channel, linked together by a central stalk and a peripheral stalk. During catalysis, ATP synthesis in the catalytic domain of F(1) is coupled via a rotary mechanism of the central stalk subunits to proton translocation. In terms of biological role, key component of the F(0) channel; it plays a direct role in translocation across the membrane. A homomeric c-ring of between 10-14 subunits forms the central stalk rotor element with the F(1) delta and epsilon subunits. In Caldicellulosiruptor saccharolyticus (strain ATCC 43494 / DSM 8903 / Tp8T 6331), this protein is ATP synthase subunit c.